A 109-amino-acid chain; its full sequence is U26-theraphotoxin-Cg1a (109 aa).

An N-terminal signal peptide occupies residues 1 to 18 (MNTIIPLLLLSLLITVYA). Residues 19–67 (YALEDGNKEEIQDIAESEFEASNEMLQLAHLLEADRAETEEDRNSRQKR) constitute a propeptide that is removed on maturation. 3 cysteine pairs are disulfide-bonded: Cys68–Cys83, Cys75–Cys88, and Cys82–Cys103.

Belongs to the neurotoxin 14 (magi-1) family. 07 (Jztx-56) subfamily. In terms of tissue distribution, expressed by the venom gland.

It localises to the secreted. Probable ion channel inhibitor. The sequence is that of U26-theraphotoxin-Cg1a from Chilobrachys guangxiensis (Chinese earth tiger tarantula).